A 220-amino-acid chain; its full sequence is 3-dehydroquinate dehydratase (220 aa).

3-dehydroquinate is bound by residues Ser-8, Glu-30–Arg-32, and Arg-63. Catalysis depends on His-114, which acts as the Proton donor/acceptor. The Schiff-base intermediate with substrate role is filled by Lys-140. 2 residues coordinate 3-dehydroquinate: Arg-174 and Gln-197.

It belongs to the type-I 3-dehydroquinase family. Homodimer.

The enzyme catalyses 3-dehydroquinate = 3-dehydroshikimate + H2O. It participates in metabolic intermediate biosynthesis; chorismate biosynthesis; chorismate from D-erythrose 4-phosphate and phosphoenolpyruvate: step 3/7. Involved in the third step of the chorismate pathway, which leads to the biosynthesis of aromatic amino acids. Catalyzes the cis-dehydration of 3-dehydroquinate (DHQ) and introduces the first double bond of the aromatic ring to yield 3-dehydroshikimate. The sequence is that of 3-dehydroquinate dehydratase from Saccharolobus solfataricus (strain ATCC 35092 / DSM 1617 / JCM 11322 / P2) (Sulfolobus solfataricus).